The following is a 429-amino-acid chain: 3-phosphoshikimate 1-carboxyvinyltransferase (429 aa).

3-phosphoshikimate-binding residues include Lys-20, Ser-21, and Arg-25. Phosphoenolpyruvate is bound at residue Lys-20. 2 residues coordinate phosphoenolpyruvate: Gly-89 and Arg-118. Residues Ser-164, Ser-165, Gln-166, Ser-192, Asp-311, and Lys-338 each contribute to the 3-phosphoshikimate site. Gln-166 contributes to the phosphoenolpyruvate binding site. Asp-311 serves as the catalytic Proton acceptor. 2 residues coordinate phosphoenolpyruvate: Arg-342 and Arg-384.

This sequence belongs to the EPSP synthase family. Monomer.

It is found in the cytoplasm. It catalyses the reaction 3-phosphoshikimate + phosphoenolpyruvate = 5-O-(1-carboxyvinyl)-3-phosphoshikimate + phosphate. The protein operates within metabolic intermediate biosynthesis; chorismate biosynthesis. Its function is as follows. Catalyzes the transfer of the enolpyruvyl moiety of phosphoenolpyruvate (PEP) to the 5-hydroxyl of shikimate-3-phosphate (S3P) to produce enolpyruvyl shikimate-3-phosphate and inorganic phosphate. This chain is 3-phosphoshikimate 1-carboxyvinyltransferase, found in Methanococcus maripaludis (strain C7 / ATCC BAA-1331).